The chain runs to 248 residues: Meiotically up-regulated gene 110 protein (248 aa).

A helical membrane pass occupies residues 23–43; sequence LRFVFWFSVLIPIFFIALIII.

The protein localises to the membrane. Its function is as follows. Has a role in meiosis. The sequence is that of Meiotically up-regulated gene 110 protein (mug110) from Schizosaccharomyces pombe (strain 972 / ATCC 24843) (Fission yeast).